A 440-amino-acid polypeptide reads, in one-letter code: Ultraviolet-B receptor UVR8 (440 aa).

Ala-2 is modified (N-acetylalanine). 8 RCC1 repeats span residues 2 to 31 (AEDMAADEVTAPPRKVLIISAGASHSVALL), 32 to 84 (SGDI…AYSQ), 86 to 137 (GMEV…AVTM), 139 to 189 (GEVQ…AVTE), 190 to 241 (DGDL…SVSY), 243 to 293 (GALY…ALTS), 294 to 345 (DGKL…AVTE), and 347 to 399 (NNVF…SGKS). Residues 397-423 (GKSWVSPAERYAVVPDETGLTDGSSKG) form a required for interaction with COP1 region. The disordered stretch occupies residues 413-440 (ETGLTDGSSKGNGGDISVPQTDVKRVRI).

Homodimer in the absence of UV-B, but absorption of UV-B induces monomerization of UVR8 and interaction with COP1. Interacts with RUP1, RUP2 and histone H2B.

It is found in the nucleus. The protein localises to the cytoplasm. Its subcellular location is the cytosol. In terms of biological role, UV-B specific signaling component that acts as a UV-B photoreceptor and plays a key role in establishing UV-protective responses in plants. Upon UV-B irradiation, UVR8 undergoes an immediate switch from homodimer to monomer, accumulates in the nucleus, interacts with the photomorphogenic repressor COP1 and regulates the expression of the transcription factor HY5 by associating with chromatin (through histone H2B binding) in the HY5 promoter region. UVR8 is involved in controlling aspects of leaf growth and morphogenesis in response to UV-B, is required for normal progression of endocycle and has a regulatory role in stomatal differentiation. Is required for plant circadian clock response to photomorphogenic UV-B light, partly through the transcriptional activation of responsive clock genes. Promotes photosynthetic efficiency at elevated levels of UV-B. Plays a role in mediating the effects of UV-B radiation on pathogen resistance by controlling the expression of the sinapate biosynthetic pathway. The two tryptophans, Trp-285 and Trp-233, serve collectively as the UV-B chromophore. This chain is Ultraviolet-B receptor UVR8, found in Arabidopsis thaliana (Mouse-ear cress).